A 341-amino-acid chain; its full sequence is UDP-3-O-(3-hydroxymyristoyl)glucosamine N-acyltransferase (341 aa).

His-239 acts as the Proton acceptor in catalysis.

This sequence belongs to the transferase hexapeptide repeat family. LpxD subfamily. As to quaternary structure, homotrimer.

The catalysed reaction is a UDP-3-O-[(3R)-3-hydroxyacyl]-alpha-D-glucosamine + a (3R)-hydroxyacyl-[ACP] = a UDP-2-N,3-O-bis[(3R)-3-hydroxyacyl]-alpha-D-glucosamine + holo-[ACP] + H(+). The enzyme catalyses UDP-3-O-[(3R)-3-hydroxytetradecanoyl]-alpha-D-glucosamine + (3R)-hydroxytetradecanoyl-[ACP] = UDP-2-N,3-O-bis[(3R)-3-hydroxytetradecanoyl]-alpha-D-glucosamine + holo-[ACP] + H(+). Its pathway is glycolipid biosynthesis; lipid IV(A) biosynthesis; lipid IV(A) from (3R)-3-hydroxytetradecanoyl-[acyl-carrier-protein] and UDP-N-acetyl-alpha-D-glucosamine: step 3/6. In terms of biological role, catalyzes the N-acylation of UDP-3-O-(hydroxytetradecanoyl)glucosamine using 3-hydroxytetradecanoyl-ACP as the acyl donor. Is involved in the biosynthesis of lipid A, a phosphorylated glycolipid that anchors the lipopolysaccharide to the outer membrane of the cell. This Escherichia coli (strain UTI89 / UPEC) protein is UDP-3-O-(3-hydroxymyristoyl)glucosamine N-acyltransferase.